Consider the following 565-residue polypeptide: Hemagglutinin-neuraminidase (565 aa).

Residues 1-19 (MVAEDAPVRATCRVLFRTT) are Intravirion-facing. A helical membrane pass occupies residues 20 to 40 (TLIFLCTLLALSISILYESLI). Residues 41–565 (TQKQIMSQAG…VPFIRQVTLS (525 aa)) lie on the Virion surface side of the membrane. Asparagine 139 carries N-linked (GlcNAc...) asparagine; by host glycosylation. Cystine bridges form between cysteine 161/cysteine 185, cysteine 175/cysteine 236, and cysteine 227/cysteine 240. The segment at 223 to 228 (NRKSCS) is involved in neuraminidase activity. Asparagine 267 carries N-linked (GlcNAc...) asparagine; by host glycosylation. Intrachain disulfides connect cysteine 333-cysteine 454, cysteine 365-cysteine 375, and cysteine 448-cysteine 458. An N-linked (GlcNAc...) asparagine; by host glycan is attached at asparagine 504. A disulfide bridge links cysteine 528 with cysteine 539.

This sequence belongs to the paramyxoviruses hemagglutinin-neuraminidase family. As to quaternary structure, homotetramer; composed of disulfide-linked homodimers. Interacts with F protein trimer.

It localises to the virion membrane. The protein resides in the host cell membrane. The catalysed reaction is Hydrolysis of alpha-(2-&gt;3)-, alpha-(2-&gt;6)-, alpha-(2-&gt;8)- glycosidic linkages of terminal sialic acid residues in oligosaccharides, glycoproteins, glycolipids, colominic acid and synthetic substrates.. Functionally, attaches the virus to sialic acid-containing cell receptors and thereby initiating infection. Binding of HN protein to the receptor induces a conformational change that allows the F protein to trigger virion/cell membranes fusion. In terms of biological role, neuraminidase activity ensures the efficient spread of the virus by dissociating the mature virions from the neuraminic acid containing glycoproteins. This Canis lupus familiaris (Dog) protein is Hemagglutinin-neuraminidase (HN).